Reading from the N-terminus, the 217-residue chain is MPTPHEAEKQITGPEEADRPPSMSSHDTASPAAPSRNPCCLCWCCCCSCSWNQERRRAWQASRESKLQPLPSCEVCATPSPEEVQSWAQSFDKLMHSPAGRSVFRAFLRTEYSEENMLFWLACEELKAEANQHVVDEKARLIYEDYVSILSPKEVSLDSRVREGINKKMQEPSAHTFDDAQLQIYTLMHRDSYPRFLSSPTYRALLLQGPSQSSSEA.

The interval 1–29 (MPTPHEAEKQITGPEEADRPPSMSSHDTA) is disordered. Phosphoserine is present on residues Ser24 and Ser97. The region spanning 90 to 206 (SFDKLMHSPA…LSSPTYRALL (117 aa)) is the RGS domain. Residue Ser151 is modified to Phosphoserine; by MAPK1 and MAPK3. The interaction with GIPC stretch occupies residues 207 to 217 (LQGPSQSSSEA).

As to quaternary structure, interacts with GIPC PDZ domain. Interacts with GNAO1. Fatty acylated. Heavily palmitoylated in the cysteine string motif. Post-translationally, phosphorylated, mainly on serine residues. Highest expression in lung. Placenta, liver and heart also express high levels of GAIP.

It localises to the membrane. Its function is as follows. Inhibits signal transduction by increasing the GTPase activity of G protein alpha subunits thereby driving them into their inactive GDP-bound form. Binds to G-alpha subfamily 1 members, with the order G(i)a3 &gt; G(i)a1 &gt; G(o)a &gt;&gt; G(z)a/G(i)a2. Activity on G(z)-alpha is inhibited by phosphorylation and palmitoylation of the G-protein. This is Regulator of G-protein signaling 19 (RGS19) from Homo sapiens (Human).